The primary structure comprises 42 residues: TYYELIKAAILALKERNGSSAQAIKKYILENNKIEFQQTFLR.

An H15 domain is found at 1–42; the sequence is TYYELIKAAILALKERNGSSAQAIKKYILENNKIEFQQTFLR.

Belongs to the histone H1/H5 family.

It is found in the nucleus. Its subcellular location is the chromosome. In terms of biological role, histones H1 are necessary for the condensation of nucleosome chains into higher-order structures. The sequence is that of Histone H1B from Olisthodiscus luteus (Marine phytoflagellate).